We begin with the raw amino-acid sequence, 127 residues long: MLPAGCWNDTSRDGPGFRKMKGPKVEIGGYKFPISLGAENESTSRCDTAFSFLVGKERRSPSEPNRPMKNKRRAKPNGEAHAEQARRKISVEEKQPSSFPSHPGPKAVQSFLAKSRIWGFLLRYLTI.

Disordered stretches follow at residues 1–22 (MLPAGCWNDTSRDGPGFRKMKG) and 53–106 (LVGK…PGPK). The segment covering 76–95 (PNGEAHAEQARRKISVEEKQ) has biased composition (basic and acidic residues).

Its subcellular location is the mitochondrion. This is an uncharacterized protein from Arabidopsis thaliana (Mouse-ear cress).